Here is a 937-residue protein sequence, read N- to C-terminus: Protein translocase subunit SecA (937 aa).

Residues glutamine 90, 108 to 112 (GEGKT), and aspartate 509 each bind ATP.

Belongs to the SecA family. As to quaternary structure, monomer and homodimer. Part of the essential Sec protein translocation apparatus which comprises SecA, SecYEG and auxiliary proteins SecDF. Other proteins may also be involved.

Its subcellular location is the cell inner membrane. It is found in the cellular thylakoid membrane. The protein resides in the cytoplasm. The enzyme catalyses ATP + H2O + cellular proteinSide 1 = ADP + phosphate + cellular proteinSide 2.. Functionally, part of the Sec protein translocase complex. Interacts with the SecYEG preprotein conducting channel. Has a central role in coupling the hydrolysis of ATP to the transfer of proteins into and across the cell membrane, serving as an ATP-driven molecular motor driving the stepwise translocation of polypeptide chains across the membrane. Probably participates in protein translocation into and across both the cytoplasmic and thylakoid membranes in cyanobacterial cells. The chain is Protein translocase subunit SecA from Synechococcus sp. (strain CC9902).